A 188-amino-acid chain; its full sequence is mRNA transport factor GFD1 (188 aa).

The interval 1-128 (MPLESIWADA…KTQSKQDTAS (128 aa)) is disordered. Over residues 18–28 (KQKPSHKRSNN) the composition is skewed to basic residues. The span at 29–44 (NKKNNNSRWSNESSSN) shows a compositional bias: low complexity. The span at 59-79 (GNHESKTKNKIKETLPREKKP) shows a compositional bias: basic and acidic residues. A phosphoserine mark is found at Ser-87, Ser-106, and Ser-111. The span at 112–128 (PSKMKTTKTQSKQDTAS) shows a compositional bias: low complexity. Residues 119–164 (KTQSKQDTASKMKLLKKKIEEQREILQKTHHKNQQQQVLMDFLNDE) adopt a coiled-coil conformation.

Interacts with GLE1, NUP42, NAB2, ZDS1 and probably DBP5. Forms a complex with GLE1 and NAB2.

The protein localises to the cytoplasm. The protein resides in the nucleus. It is found in the nuclear pore complex. Its subcellular location is the nucleus membrane. Its function is as follows. High-copy suppressor of mutant alleles of ATP-dependent RNA helicase DBP5, which is involved in mRNA export from the nucleus. It may also play an important role in a late stage of NAB2-mRNA export. The sequence is that of mRNA transport factor GFD1 (GFD1) from Saccharomyces cerevisiae (strain ATCC 204508 / S288c) (Baker's yeast).